The chain runs to 337 residues: Adenosine deaminase (337 aa).

H12 and H14 together coordinate Zn(2+). Substrate is bound by residues H14, D16, and G170. Residue H197 coordinates Zn(2+). E200 (proton donor) is an active-site residue. D278 contacts Zn(2+). D279 is a binding site for substrate.

The protein belongs to the metallo-dependent hydrolases superfamily. Adenosine and AMP deaminases family. Adenosine deaminase subfamily. Zn(2+) serves as cofactor.

It catalyses the reaction adenosine + H2O + H(+) = inosine + NH4(+). The catalysed reaction is 2'-deoxyadenosine + H2O + H(+) = 2'-deoxyinosine + NH4(+). Functionally, catalyzes the hydrolytic deamination of adenosine and 2-deoxyadenosine. This chain is Adenosine deaminase, found in Pectobacterium atrosepticum (strain SCRI 1043 / ATCC BAA-672) (Erwinia carotovora subsp. atroseptica).